We begin with the raw amino-acid sequence, 117 residues long: Large ribosomal subunit protein eL8 (117 aa).

It belongs to the eukaryotic ribosomal protein eL8 family. Part of the 50S ribosomal subunit. Probably part of the RNase P complex.

The protein localises to the cytoplasm. In terms of biological role, multifunctional RNA-binding protein that recognizes the K-turn motif in ribosomal RNA, the RNA component of RNase P, box H/ACA, box C/D and box C'/D' sRNAs. This Methanocaldococcus jannaschii (strain ATCC 43067 / DSM 2661 / JAL-1 / JCM 10045 / NBRC 100440) (Methanococcus jannaschii) protein is Large ribosomal subunit protein eL8.